A 340-amino-acid polypeptide reads, in one-letter code: Cyclic GMP-AMP synthase-like receptor 3 (340 aa).

ATP contacts are provided by residues Ser-62 and 74 to 76 (EAD). Residues Glu-74, Asp-76, and Asp-177 each coordinate Mg(2+). Residues Lys-241 and 255–259 (SYHLK) each bind ATP. Residues Asp-267 and Asp-270 each coordinate Mn(2+).

It belongs to the mab-21 family. Requires Mg(2+) as cofactor. Mn(2+) is required as a cofactor.

The enzyme catalyses 2 ATP = 3',3'-c-di-AMP + 2 diphosphate. Functionally, nucleotidyltransferase that catalyzes the formation of cyclic di-AMP (3',3'-c-di-AMP) from 2 molecules of ATP and plays a key role in innate immunity. Acts as a key sensor of double-stranded RNA (dsRNA), the presence of dsRNA in the cytoplasm being a danger signal that triggers the immune responses. Directly binds dsRNA, activating the nucleotidyltransferase activity, leading to synthesis of 3',3'-c-di-AMP, a second messenger that binds to and activates Sting, thereby triggering the immune response via activation of the NF-kappa-B transcription factor. This chain is Cyclic GMP-AMP synthase-like receptor 3, found in Stylophora pistillata (Smooth cauliflower coral).